Reading from the N-terminus, the 574-residue chain is Actin-binding protein wsp1 (574 aa).

Residues 19–130 (IPKSTNKIIA…KKVLDKGCHP (112 aa)) enclose the WH1 domain. 3 disordered regions span residues 144 to 186 (KGSS…ELLN), 221 to 494 (AGTP…IAEL), and 517 to 574 (KSRK…DEWD). The segment covering 149-158 (HAPNNSNIQP) has biased composition (polar residues). Composition is skewed to pro residues over residues 230–240 (PPIPPSIPSSR) and 251–260 (PAPPPIPPPS). Low complexity-rich tracts occupy residues 297–306 (SRVSAAALAA) and 324–335 (KPPIGNGSSNSS). Residues 352–368 (PLPPQGRSAPPPPPPRS) are compositionally biased toward pro residues. Residue Ser386 is modified to Phosphoserine. Pro residues predominate over residues 415-485 (PPVPTPPSLP…PPPAPAPAPA (71 aa)). Residues 499–518 (GRANLMASIRASGGMDLLKS) enclose the WH2 domain. The span at 521-545 (VSASPSVASTKTSNPPVEAPPSNNL) shows a compositional bias: polar residues. Positions 563 to 574 (SDEEDEDDDEWD) are enriched in acidic residues.

Interacts with vrp1.

It is found in the cytoplasm. The protein localises to the cytoskeleton. Functionally, has a role in regulating actin assembly, so regulating polarized growth. This Schizosaccharomyces pombe (strain 972 / ATCC 24843) (Fission yeast) protein is Actin-binding protein wsp1 (wsp1).